The primary structure comprises 188 residues: Elongation factor P (188 aa).

Residue K34 is modified to N6-(3,6-diaminohexanoyl)-5-hydroxylysine.

This sequence belongs to the elongation factor P family. In terms of processing, may be beta-lysylated on the epsilon-amino group of Lys-34 by the combined action of EpmA and EpmB, and then hydroxylated on the C5 position of the same residue by EpmC (if this protein is present). Lysylation is critical for the stimulatory effect of EF-P on peptide-bond formation. The lysylation moiety may extend toward the peptidyltransferase center and stabilize the terminal 3-CCA end of the tRNA. Hydroxylation of the C5 position on Lys-34 may allow additional potential stabilizing hydrogen-bond interactions with the P-tRNA.

It localises to the cytoplasm. Its pathway is protein biosynthesis; polypeptide chain elongation. Functionally, involved in peptide bond synthesis. Alleviates ribosome stalling that occurs when 3 or more consecutive Pro residues or the sequence PPG is present in a protein, possibly by augmenting the peptidyl transferase activity of the ribosome. Modification of Lys-34 is required for alleviation. The chain is Elongation factor P from Vibrio atlanticus (strain LGP32) (Vibrio splendidus (strain Mel32)).